A 485-amino-acid chain; its full sequence is Glutamyl-tRNA(Gln) amidotransferase subunit A (485 aa).

Active-site charge relay system residues include K76 and S151. S175 acts as the Acyl-ester intermediate in catalysis.

It belongs to the amidase family. GatA subfamily. In terms of assembly, heterotrimer of A, B and C subunits.

The enzyme catalyses L-glutamyl-tRNA(Gln) + L-glutamine + ATP + H2O = L-glutaminyl-tRNA(Gln) + L-glutamate + ADP + phosphate + H(+). In terms of biological role, allows the formation of correctly charged Gln-tRNA(Gln) through the transamidation of misacylated Glu-tRNA(Gln) in organisms which lack glutaminyl-tRNA synthetase. The reaction takes place in the presence of glutamine and ATP through an activated gamma-phospho-Glu-tRNA(Gln). The chain is Glutamyl-tRNA(Gln) amidotransferase subunit A from Methylococcus capsulatus (strain ATCC 33009 / NCIMB 11132 / Bath).